Reading from the N-terminus, the 670-residue chain is Small ribosomal subunit protein mS39 (670 aa).

A mitochondrion-targeting transit peptide spans 1–13; that stretch reads MAAPCVRLGSVRC. PPR repeat units lie at residues 129 to 163, 164 to 199, 209 to 239, 240 to 274, 275 to 314, 315 to 351, 352 to 392, 396 to 430, 438 to 472, 473 to 507, and 556 to 590; these read VEGV…GTAP, SLET…EVQD, RPRQ…MPER, NAHS…RLTA, DVQT…NVRP, NLLT…NIEP, SLAT…FTLR, DVYF…DNRG, QSTY…LYYP, NSRG…GHSN, and SAGS…HRVP. The disordered stretch occupies residues 187–213; it reads IQTSEQEQQEVQDQQETEDPKKRPRQY. Acidic residues predominate over residues 193-203; the sequence is EQQEVQDQQET. The disordered stretch occupies residues 648 to 670; sequence EDLQKSHSSSSSSSSSSSDSDRE. The span at 653 to 670 shows a compositional bias: low complexity; the sequence is SHSSSSSSSSSSSDSDRE.

This sequence belongs to the mitochondrion-specific ribosomal protein mS39 family.

The protein resides in the mitochondrion. Functionally, mitochondrial protein that may have a role in mitochondrial translation. The polypeptide is Small ribosomal subunit protein mS39 (ptcd3) (Xenopus tropicalis (Western clawed frog)).